Consider the following 485-residue polypeptide: Glutamate--tRNA ligase (485 aa).

Residues proline 11–asparagine 21 carry the 'HIGH' region motif. The short motif at lysine 252–arginine 256 is the 'KMSKS' region element. Lysine 255 contacts ATP.

This sequence belongs to the class-I aminoacyl-tRNA synthetase family. Glutamate--tRNA ligase type 1 subfamily. In terms of assembly, monomer.

It is found in the cytoplasm. The enzyme catalyses tRNA(Glu) + L-glutamate + ATP = L-glutamyl-tRNA(Glu) + AMP + diphosphate. Functionally, catalyzes the attachment of glutamate to tRNA(Glu) in a two-step reaction: glutamate is first activated by ATP to form Glu-AMP and then transferred to the acceptor end of tRNA(Glu). The chain is Glutamate--tRNA ligase from Bacillus licheniformis (strain ATCC 14580 / DSM 13 / JCM 2505 / CCUG 7422 / NBRC 12200 / NCIMB 9375 / NCTC 10341 / NRRL NRS-1264 / Gibson 46).